The sequence spans 320 residues: Mycothiol acetyltransferase (320 aa).

N-acetyltransferase domains are found at residues 16-141 (RQVR…RSLR) and 152-320 (LQIR…AALA). Residue Glu-36 participates in 1D-myo-inositol 2-(L-cysteinylamino)-2-deoxy-alpha-D-glucopyranoside binding. Acetyl-CoA contacts are provided by residues 80-82 (LVV) and 88-93 (RRGIAT). 3 residues coordinate 1D-myo-inositol 2-(L-cysteinylamino)-2-deoxy-alpha-D-glucopyranoside: Glu-179, Lys-229, and Glu-239. Residues 243–245 (LGV) and 250–256 (QGRGLGR) each bind acetyl-CoA. Residue Tyr-284 coordinates 1D-myo-inositol 2-(L-cysteinylamino)-2-deoxy-alpha-D-glucopyranoside. 289–294 (NIAAVR) is an acetyl-CoA binding site.

This sequence belongs to the acetyltransferase family. MshD subfamily. Monomer.

It catalyses the reaction 1D-myo-inositol 2-(L-cysteinylamino)-2-deoxy-alpha-D-glucopyranoside + acetyl-CoA = mycothiol + CoA + H(+). In terms of biological role, catalyzes the transfer of acetyl from acetyl-CoA to desacetylmycothiol (Cys-GlcN-Ins) to form mycothiol. This Mycobacterium marinum (strain ATCC BAA-535 / M) protein is Mycothiol acetyltransferase.